The following is a 335-amino-acid chain: Fimbrial adhesin PapGIII (335 aa).

Positions 1-21 (MKKWLPAFLFLSLSGCNDALA) are cleaved as a signal peptide.

Belongs to the adhesin PapG family.

Its subcellular location is the secreted. The protein resides in the fimbrium. In terms of biological role, tip adhesin component of type P pili that binds preferentially to Gal-alpha(1-4)-Gal-containing glycolipids such as globoside. This tip is common in E.coli strains that cause human cystitis, but rare in pyelonephritic isolates. The protein is Fimbrial adhesin PapGIII of Escherichia coli.